The following is a 276-amino-acid chain: ADP-dependent (S)-NAD(P)H-hydrate dehydratase (276 aa).

The 269-residue stretch at 7-275 (TEEHVRATLP…DILPRVWKRF (269 aa)) folds into the YjeF C-terminal domain. Residues alanine 42, glycine 104, and histidine 149 each coordinate (6S)-NADPHX. Residues 186 to 190 (KGNQT) and glycine 215 contribute to the AMP site. Aspartate 216 is a (6S)-NADPHX binding site.

It belongs to the NnrD/CARKD family. As to quaternary structure, homotetramer. Mg(2+) is required as a cofactor.

The enzyme catalyses (6S)-NADHX + ADP = AMP + phosphate + NADH + H(+). It carries out the reaction (6S)-NADPHX + ADP = AMP + phosphate + NADPH + H(+). Its function is as follows. Catalyzes the dehydration of the S-form of NAD(P)HX at the expense of ADP, which is converted to AMP. Together with NAD(P)HX epimerase, which catalyzes the epimerization of the S- and R-forms, the enzyme allows the repair of both epimers of NAD(P)HX, a damaged form of NAD(P)H that is a result of enzymatic or heat-dependent hydration. This chain is ADP-dependent (S)-NAD(P)H-hydrate dehydratase, found in Bacillus subtilis (strain 168).